A 394-amino-acid chain; its full sequence is Potassium channel subfamily K member 18 (394 aa).

The Cytoplasmic portion of the chain corresponds to 1 to 31; it reads MEAEEPPEARRCCPEALGKARGCCPEALGKL. The chain crosses the membrane as a helical span at residues 32–52; it reads LPGLCFLCCLVTYALVGAALF. The N-linked (GlcNAc...) asparagine glycan is linked to Asn-83. Residues 114–140 constitute an intramembrane region (pore-forming); it reads FLSALFFCCTVFSTVGYGHMYPVTRLG. The K(+) site is built by Thr-127, Val-128, Gly-129, and Tyr-130. The segment at 127–132 is selectivity filter 1; the sequence is TVGYGH. Residues 142-162 traverse the membrane as a helical segment; the sequence is FLCMLYALFGIPLMFLVLTDI. Topologically, residues 163–292 are cytoplasmic; that stretch reads GDILATILSR…EVGQQVERLD (130 aa). Residues 210–215 are interaction with calcineurin; the sequence is PQIVID. The interaction with YWHAH stretch occupies residues 261 to 266; sequence RSNSCP. Residues Ser-264 and Ser-276 each carry the phosphoserine modification. A helical transmembrane segment spans residues 293–313; the sequence is IPLPVIALVVFAYISCAAAIL. The segment at residues 326–340 is an intramembrane region (pore-forming); the sequence is FYFCFVTLTTIGFGD. The interval 335–340 is selectivity filter 2; the sequence is TIGFGD. The chain crosses the membrane as a helical span at residues 347-367; it reads HFFLFFSIYIIVGMEILFIAF. Residues 368–394 are Cytoplasmic-facing; the sequence is KLMQNRLLHTYKTLMLFVCQREVSLPW.

The protein belongs to the two pore domain potassium channel (TC 1.A.1.8) family. As to quaternary structure, homodimer. Heterodimer with KCNK2. Heterodimer with KCNK10. Interacts with calcineurin. Interacts with YWHAH, in a phosphorylation-dependent manner. In terms of processing, phosphorylation of Ser-264 is required for the binding of 14-3-3eta/YWHAH. Calcineurin-mediated dephosphorylation of Ser-276 enhances channel activity. Post-translationally, N-glycosylated. In terms of tissue distribution, detected in brain cortex, cerebellum, dorsal root ganglion, spinal cord and testis. High expression in trigeminal ganglion (at protein level), also expressed in autonomic nervous system ganglia such as the stellate ganglion and paravertebral sympathetic ganglia. Expressed in all adult spinal cord and brain regions, with slightly higher expression in thalamus, hypothalamus, hippocampus and posterior corte (at protein level). In non-neuronal tissues, substantial expression found in lung and heart and weal expression in liver, testis, kidney, small intestine and spleen. Expressed in regulatory T cells (at protein level).

It is found in the cell membrane. It catalyses the reaction K(+)(in) = K(+)(out). With respect to regulation, activated upon cell stimulation via Ca(2+)-mobilizing receptors, such as CHRM1/M1 muscarinic receptor and AGTR1/AT1a angiotensin receptor. Activated by volatile anesthetics, such as isoflurane and inhibited by local anesthetics such as bupivacaine and lidocaine. Inhibited by extracellular acidic pH. Inhibited by Zn(2+) ions. Inhibited by hydroxy-alpha-sanshool, an ingredient of Schezuan pepper. Inhibited by Ba(2+) ions. Functionally, k(+) channel that conducts outward and inward rectifying currents at depolarized and hyperpolarized membrane potentials, respectively. The outward rectifying currents are voltage-dependent, coupled to K(+) electrochemical gradient across the membrane, whereas the inward currents can be induced in response to activation of Ca(2+)-mobilizing receptors. Homo- and heterodimerizes to form functional channels with distinct regulatory and gating properties. In trigeminal ganglia sensory neurons, the heterodimers of KCNK18/TRESK and KCNK2/TREK-1 or KCNK10/TREK-2 inhibit neuronal firing and neurogenic inflammation by stabilizing the resting membrane potential at K(+) equilibrium potential as well as by regulating the threshold of action potentials and the spike frequency. In thymocytes, conducts K(+) currents upon T cell receptor (TCR) signaling leading to sustained Ca(2+) influx and NF-kappa-B activation, FOXP3 transcription and positive selection of regulatory T cell (Treg) progenitor subsets. Appears to mediate the analgesics effects of hydroxy-alpha-sanshool, a metabolite naturally present in Schezuan pepper and other Xanthoxylum plants. The chain is Potassium channel subfamily K member 18 from Mus musculus (Mouse).